The primary structure comprises 186 residues: MKKEYWNKPTMDLWDRLYIFEVIRGLCITGSVFFGNMWKWLTFRKGALTAYYPEELRADYSSANRGRHLLTTRADGKVQCVSCNMCATVCPAYCIEIQSAADFNDPFHPKSPDRFEIDYSRCIFCGFCVEACPEDAIRMSKDTPNFPGFDRENMWATQDLLMNWQPASDAAKSYPGSGQAHQEVHP.

2 consecutive 4Fe-4S ferredoxin-type domains span residues 70–100 and 113–142; these read LTTR…IQSA and DRFE…MSKD. Positions 80, 83, 86, 90, 122, 125, 128, and 132 each coordinate [4Fe-4S] cluster.

This sequence belongs to the complex I 23 kDa subunit family. In terms of assembly, NDH-1 is composed of 14 different subunits. Subunits NuoA, H, J, K, L, M, N constitute the membrane sector of the complex. The cofactor is [4Fe-4S] cluster.

Its subcellular location is the cell inner membrane. The enzyme catalyses a quinone + NADH + 5 H(+)(in) = a quinol + NAD(+) + 4 H(+)(out). In terms of biological role, NDH-1 shuttles electrons from NADH, via FMN and iron-sulfur (Fe-S) centers, to quinones in the respiratory chain. The immediate electron acceptor for the enzyme in this species is believed to be ubiquinone. Couples the redox reaction to proton translocation (for every two electrons transferred, four hydrogen ions are translocated across the cytoplasmic membrane), and thus conserves the redox energy in a proton gradient. The sequence is that of NADH-quinone oxidoreductase subunit I from Pelobacter propionicus (strain DSM 2379 / NBRC 103807 / OttBd1).